We begin with the raw amino-acid sequence, 256 residues long: Venom allergen-1 (256 aa).

A signal peptide spans 1–21 (MAFNGIALLITATIFIGSCYA). The 147-residue stretch at 65–211 (LNTHNKLRAE…MINYYLVCNY (147 aa)) folds into the SCP domain. Asn-146 and Asn-210 each carry an N-linked (GlcNAc...) asparagine glycan.

Belongs to the CRISP family.

It is found in the secreted. In terms of biological role, activates autophagy in human monocytic cells, dendritic cells and macrophages. Functionally, (Microbial infection) Promotes Zika virus replication in human dendritic cells and macrophages. Facilitates Zika virus transmission from infected mosquitoes to the host in mouse model. This chain is Venom allergen-1, found in Aedes albopictus (Asian tiger mosquito).